We begin with the raw amino-acid sequence, 340 residues long: Protein S-acyltransferase 10 (340 aa).

Helical transmembrane passes span 34 to 54 (LLLKLALVALHLVFIGFLFLF) and 66 to 86 (PWYMGCYILLFSATLLQYFVT). The region spanning 162–212 (LTCGYCHVEQPPRTKHCHDCDRCVLQFDHHCVWLGTCIGQKNHSKFWWYIC) is the DHHC domain. Catalysis depends on C192, which acts as the S-palmitoyl cysteine intermediate. Transmembrane regions (helical) follow at residues 207–227 (FWWYICEETTLCIWTLIMYVD) and 241–261 (IIILLLVILAISLIFVLLLLI).

It belongs to the DHHC palmitoyltransferase family. As to expression, expressed in mature embryos, embryo sacs, cotyledons, whole seedlings, hydathodes, guard cells, sites of lateral root initiation, root tips and phloem, but not in xylem.

The protein resides in the vacuole membrane. The enzyme catalyses L-cysteinyl-[protein] + hexadecanoyl-CoA = S-hexadecanoyl-L-cysteinyl-[protein] + CoA. S-acyltransferase involved in protein lipid modification. Catalyzes the palmitoylation of proteins peripheral or integral to the tonoplast. Required for the tonoplast localization of CBL2, CBL3 and CBL6, but not for the plasma membrane localization of CBL9, for the endosome localization of RABF1 or for the endomembrane localization of RABF2B. This Arabidopsis thaliana (Mouse-ear cress) protein is Protein S-acyltransferase 10 (PAT10).